Reading from the N-terminus, the 33-residue chain is Dolabellanin-B2 (33 aa).

In terms of processing, contains two disulfide bonds. Up to two of the methionines may be oxidized to methionine sulfoxides.

The protein localises to the secreted. In terms of biological role, has antibacterial activity against Gram-negative bacteria E.coli JM109 and DH5-alpha, H.influenza IID 983, and V.vulnificus RIMD 2219009. Has antibacterial activity against Gram-positive bacteria S.aureus IID 1677, B.subtilis RIMD 0225014 and L.monocytogenes VIU206. Possesses antifungal activity against S.cerevisiae A581A, S.pombe IFO 1628, C.albicans ATCC 36232 and TIMM-1623, and C.tropicalis TIMM-0313. This Dolabella auricularia (Shoulderblade sea cat) protein is Dolabellanin-B2.